The chain runs to 409 residues: Broad specificity amino-acid racemase (409 aa).

The N-terminal stretch at 1–24 is a signal peptide; the sequence is MPFRRTLLAASLALLITGQAPLYA. Residues Cys71 and Cys97 are joined by a disulfide bond. Residue Lys75 is the Proton acceptor of the active site. N6-(pyridoxal phosphate)lysine is present on Lys75. Position 174 (Arg174) interacts with substrate. The active-site Proton acceptor is the Tyr301. Met349 is a binding site for substrate.

This sequence belongs to the alanine racemase family. Bsr subfamily. The cofactor is pyridoxal 5'-phosphate.

Its subcellular location is the periplasm. The catalysed reaction is an L-alpha-amino acid = a D-alpha-amino acid. It carries out the reaction L-lysine = D-lysine. The enzyme catalyses L-arginine = D-arginine. It catalyses the reaction L-glutamine = D-glutamine. In terms of biological role, amino-acid racemase able to utilize a broad range of substrates. Reversibly racemizes 9 of the 19 natural chiral amino acids known, including both positively charged amino acids (Lys, Arg and His) and non-beta-branched aliphatic amino acids (Ala, Leu, Met, Ser, Gln and Asn). Among these amino acids, activity is the highest with lysine and arginine, and poor or very poor with the others. Plays a primary role in the catabolism of basic amino acid, that allows P.putida strain KT2440 to grow on L-Lys and L-Arg as the sole source of carbon and nitrogen, through conversion to their respective D-enantiomers. The protein is Broad specificity amino-acid racemase of Pseudomonas putida (strain ATCC 47054 / DSM 6125 / CFBP 8728 / NCIMB 11950 / KT2440).